The sequence spans 68 residues: Conotoxin G1.9 (68 aa).

Positions 1-21 (MGMRMMFTVFLLVVLATTVVS) are cleaved as a signal peptide. A propeptide spanning residues 22–44 (FTSRRGPKSRRGEPVPTTVINYG) is cleaved from the precursor. 2 disulfides stabilise this stretch: Cys46/Cys52 and Cys47/Cys61.

Belongs to the conotoxin A superfamily. As to expression, expressed by the venom duct.

The protein resides in the secreted. Functionally, does not show activity on all the human nAChR subtypes studied. The sequence is that of Conotoxin G1.9 from Conus geographus (Geography cone).